The following is a 229-amino-acid chain: 7-cyano-7-deazaguanine synthase (229 aa).

An ATP-binding site is contributed by leucine 15–valine 25. Cysteine 194, cysteine 204, cysteine 207, and cysteine 210 together coordinate Zn(2+).

This sequence belongs to the QueC family. Zn(2+) serves as cofactor.

The catalysed reaction is 7-carboxy-7-deazaguanine + NH4(+) + ATP = 7-cyano-7-deazaguanine + ADP + phosphate + H2O + H(+). Its pathway is purine metabolism; 7-cyano-7-deazaguanine biosynthesis. Functionally, catalyzes the ATP-dependent conversion of 7-carboxy-7-deazaguanine (CDG) to 7-cyano-7-deazaguanine (preQ(0)). The chain is 7-cyano-7-deazaguanine synthase from Pseudomonas savastanoi pv. phaseolicola (strain 1448A / Race 6) (Pseudomonas syringae pv. phaseolicola (strain 1448A / Race 6)).